The chain runs to 202 residues: ATP-dependent Clp protease proteolytic subunit (202 aa).

Serine 101 (nucleophile) is an active-site residue. Histidine 126 is an active-site residue.

It belongs to the peptidase S14 family. As to quaternary structure, component of the chloroplastic Clp protease core complex.

The protein localises to the plastid. It localises to the chloroplast stroma. It catalyses the reaction Hydrolysis of proteins to small peptides in the presence of ATP and magnesium. alpha-casein is the usual test substrate. In the absence of ATP, only oligopeptides shorter than five residues are hydrolyzed (such as succinyl-Leu-Tyr-|-NHMec, and Leu-Tyr-Leu-|-Tyr-Trp, in which cleavage of the -Tyr-|-Leu- and -Tyr-|-Trp bonds also occurs).. In terms of biological role, cleaves peptides in various proteins in a process that requires ATP hydrolysis. Has a chymotrypsin-like activity. Plays a major role in the degradation of misfolded proteins. The sequence is that of ATP-dependent Clp protease proteolytic subunit from Illicium oligandrum (Star anise).